The following is a 129-amino-acid chain: Small ribosomal subunit protein uS11 (129 aa).

The protein belongs to the universal ribosomal protein uS11 family. Part of the 30S ribosomal subunit. Interacts with proteins S7 and S18. Binds to IF-3.

Its function is as follows. Located on the platform of the 30S subunit, it bridges several disparate RNA helices of the 16S rRNA. Forms part of the Shine-Dalgarno cleft in the 70S ribosome. The protein is Small ribosomal subunit protein uS11 of Marinobacter nauticus (strain ATCC 700491 / DSM 11845 / VT8) (Marinobacter aquaeolei).